A 617-amino-acid polypeptide reads, in one-letter code: V-type proton ATPase catalytic subunit A (617 aa).

At threonine 136 the chain carries Phosphothreonine. ATP is bound at residue 250–257 (GAFGCGKT). Serine 384 carries the post-translational modification Phosphoserine; by AMPK.

This sequence belongs to the ATPase alpha/beta chains family. In terms of assembly, V-ATPase is a heteromultimeric enzyme made up of two complexes: the ATP-hydrolytic V1 complex and the proton translocation V0 complex. The V1 complex consists of three catalytic AB heterodimers that form a heterohexamer, three peripheral stalks each consisting of EG heterodimers, one central rotor including subunits D and F, and the regulatory subunits C and H. The proton translocation complex V0 consists of the proton transport subunit a, a ring of proteolipid subunits c9c'', rotary subunit d, subunits e and f, and the accessory subunits ATP6AP1/Ac45 and ATP6AP2/PRR. Interacts with the V0 complex V-ATPase subunit a4 ATP6V0A4. Interacts with WFS1. Interacts with alpha-crystallin B chain/CRYAB and with MTOR, forming a ternary complex. Phosphorylation at Ser-384 by AMPK down-regulates its enzyme activity. In terms of tissue distribution, expressed in brain (at protein level).

It localises to the cytoplasm. The protein localises to the cytosol. It is found in the cytoplasmic vesicle. The protein resides in the secretory vesicle. Its subcellular location is the clathrin-coated vesicle membrane. It localises to the lysosome. It catalyses the reaction ATP + H2O + 4 H(+)(in) = ADP + phosphate + 5 H(+)(out). With respect to regulation, ATP hydrolysis occurs at the interface between the nucleotide-binding domains of subunits A and B. ATP hydrolysis triggers a conformational change in the subunits D and F, which induces a shift of subunit d. The c-ring is subsequently rotated and results in a continuous proton translocation across the membrane. The V-ATPase is inhibited by bafilomycin A. Catalytic subunit of the V1 complex of vacuolar(H+)-ATPase (V-ATPase), a multisubunit enzyme composed of a peripheral complex (V1) that hydrolyzes ATP and a membrane integral complex (V0) that translocates protons. V-ATPase is responsible for acidifying and maintaining the pH of intracellular compartments and in some cell types, is targeted to the plasma membrane, where it is responsible for acidifying the extracellular environment. In aerobic conditions, involved in intracellular iron homeostasis, thus triggering the activity of Fe(2+) prolyl hydroxylase (PHD) enzymes, and leading to HIF1A hydroxylation and subsequent proteasomal degradation. May play a role in neurite development and synaptic connectivity. The sequence is that of V-type proton ATPase catalytic subunit A (ATP6V1A) from Bos taurus (Bovine).